We begin with the raw amino-acid sequence, 639 residues long: Probable endo-1,3(4)-beta-glucanase ACLA_073210 (639 aa).

Residues 1–21 (MAPSSLLLSVGSLIASSLASA) form the signal peptide. The GH16 domain occupies 26 to 290 (IREQSQSYQL…WAGNVFGESG (265 aa)). Asn-65 is a glycosylation site (N-linked (GlcNAc...) asparagine). Catalysis depends on Glu-146, which acts as the Nucleophile. Glu-151 serves as the catalytic Proton donor. Disordered stretches follow at residues 337–384 (TVAS…TVAE) and 442–545 (QSSS…GSSI). The segment covering 339–348 (ASPNTASEVH) has biased composition (polar residues). Composition is skewed to low complexity over residues 362 to 376 (PTVP…VPPA) and 478 to 488 (TTTEAVAETET). Ala-617 carries the GPI-anchor amidated alanine lipid modification. A propeptide spans 618 to 639 (GARKLSVGLSGLVGALAVAALA) (removed in mature form).

The protein belongs to the glycosyl hydrolase 16 family.

Its subcellular location is the cell membrane. The catalysed reaction is Endohydrolysis of (1-&gt;3)- or (1-&gt;4)-linkages in beta-D-glucans when the glucose residue whose reducing group is involved in the linkage to be hydrolyzed is itself substituted at C-3.. Its function is as follows. Mixed-linked glucanase involved in the degradation of complex natural cellulosic substrates. In Aspergillus clavatus (strain ATCC 1007 / CBS 513.65 / DSM 816 / NCTC 3887 / NRRL 1 / QM 1276 / 107), this protein is Probable endo-1,3(4)-beta-glucanase ACLA_073210.